Here is a 214-residue protein sequence, read N- to C-terminus: ER lumen protein-retaining receptor 3 (214 aa).

The Lumenal segment spans residues 1–4 (MNIF). Residues 5–24 (RILGDVSHLLAIIILLLKMW) traverse the membrane as a helical segment. At 25–32 (KSKSCAGI) the chain is on the cytoplasmic side. The chain crosses the membrane as a helical span at residues 33 to 52 (SGKSQLLFALVFTTRYLDLF). An interaction with the K-D-E-L motif on target proteins region spans residues 47–48 (RY). Residues 53–58 (TVFISP) lie on the Lumenal side of the membrane. Residues 59-79 (YNTVMKIIFLACAYVTVYLIY) traverse the membrane as a helical segment. Over 80–92 (GKLRKSYDSENDT) the chain is Cytoplasmic. The chain crosses the membrane as a helical span at residues 93–110 (FRLEFLLVPVIGLSFLEN). Topologically, residues 111 to 116 (YEFTPL) are lumenal. A helical transmembrane segment spans residues 117–135 (EILWTFSIYLESVAILPQL). At 136–149 (FMISKTGEAESITT) the chain is on the cytoplasmic side. A helical transmembrane segment spans residues 150–168 (HYLFFLGLYRVLYLANWIW). Residues 159–169 (RVLYLANWIWR) are interaction with the K-D-E-L motif on target proteins. Residues 169–178 (RYHTEKFYDQ) are Lumenal-facing. Residues 179-199 (IAVVSGVVQTIFYFDFFYLYV) traverse the membrane as a helical segment. The Cytoplasmic segment spans residues 200–214 (TKVLKGKKLSLPMPV). An important for recycling of cargo proteins with the sequence motif K-D-E-L from the Golgi to the endoplasmic reticulum region spans residues 204-207 (KGKK).

It belongs to the ERD2 family.

It localises to the endoplasmic reticulum membrane. Its subcellular location is the golgi apparatus membrane. The protein localises to the cytoplasmic vesicle. The protein resides in the COPI-coated vesicle membrane. Its function is as follows. Receptor for the C-terminal sequence motif K-D-E-L that is present on endoplasmic reticulum resident proteins and that mediates their recycling from the Golgi back to the endoplasmic reticulum. This Xenopus laevis (African clawed frog) protein is ER lumen protein-retaining receptor 3 (kdelr3).